The chain runs to 667 residues: MKAIVFAYHDIGCVGLNALAEAGYDIQAVFTHTDNPGENRFFSSVARVAADLALPVFAPEDVNHPLWVERIRELQPDIIFSFYYRNMLSDEILSLAPQGGFNLHGSLLPQYRGRAPINWVLVNGETETGVTLHQMVKKADAGPIAGQYKVAISDVDTALTLHAKMRDAAQELLRNLLPRMKEGPLPLTPQKEADASYFGRRTAADGEIHWQKSAFTINNLVRAVTEPYPGAFSYLGQRKLTIWRSRPLDLVHNKLPGTVLSTAPLTVACGEGALEIITGKGEAGLYVQGDRLAQEMGIVTDVRLGNKPSNTLKRRTRVLILGVNGFIGNHLTERLLQDDRYEVYGLDIGSDAISRFLGNPAFHFVEGDISIHSEWIEYHIKKCDVILPLVAIATPIEYTRNPLRVFELDFEENLKIVRDCVKYNKRIVFPSTSEVYGMCDDKEFDEDTSRLIVGPINKQRWIYSVSKQLLDRVIWAYGVKEGLKFTLFRPFNWMGPRLDNLDAARIGSSRAITQLILNLVEGSPIKLVDGGAQKRCFTDIHDGIEALFRIIENRDGCCDGQIINIGNPTNEASIRELAEMLLTSFENHELRDHFPPFAGFKDIESSAYYGKGYQDVEYRTPSIKNARRILHWQPEIAMQQTVTETLDFFLRAAVIEKTAAPKDELNA.

A formyltransferase ArnAFT region spans residues 1–304 (MKAIVFAYHD…EMGIVTDVRL (304 aa)). The active-site Proton donor; for formyltransferase activity is His104. Residues Arg114 and 136–140 (VKKAD) each bind (6R)-10-formyltetrahydrofolate. The dehydrogenase ArnADH stretch occupies residues 314–667 (RRTRVLILGV…TAAPKDELNA (354 aa)). NAD(+) contacts are provided by residues Asp347 and 368–369 (DI). Residues Ala393, Tyr398, and 432-433 (TS) each bind UDP-alpha-D-glucuronate. The active-site Proton acceptor; for decarboxylase activity is the Glu434. Residues Arg460, Asn492, 526–535 (KLVDGGAQKR), and Tyr613 each bind UDP-alpha-D-glucuronate. Arg619 acts as the Proton donor; for decarboxylase activity in catalysis.

The protein in the N-terminal section; belongs to the Fmt family. UDP-L-Ara4N formyltransferase subfamily. This sequence in the C-terminal section; belongs to the NAD(P)-dependent epimerase/dehydratase family. UDP-glucuronic acid decarboxylase subfamily. In terms of assembly, homohexamer, formed by a dimer of trimers.

The enzyme catalyses UDP-alpha-D-glucuronate + NAD(+) = UDP-beta-L-threo-pentopyranos-4-ulose + CO2 + NADH. It carries out the reaction UDP-4-amino-4-deoxy-beta-L-arabinose + (6R)-10-formyltetrahydrofolate = UDP-4-deoxy-4-formamido-beta-L-arabinose + (6S)-5,6,7,8-tetrahydrofolate + H(+). It functions in the pathway nucleotide-sugar biosynthesis; UDP-4-deoxy-4-formamido-beta-L-arabinose biosynthesis; UDP-4-deoxy-4-formamido-beta-L-arabinose from UDP-alpha-D-glucuronate: step 1/3. It participates in nucleotide-sugar biosynthesis; UDP-4-deoxy-4-formamido-beta-L-arabinose biosynthesis; UDP-4-deoxy-4-formamido-beta-L-arabinose from UDP-alpha-D-glucuronate: step 3/3. Its pathway is bacterial outer membrane biogenesis; lipopolysaccharide biosynthesis. Bifunctional enzyme that catalyzes the oxidative decarboxylation of UDP-glucuronic acid (UDP-GlcUA) to UDP-4-keto-arabinose (UDP-Ara4O) and the addition of a formyl group to UDP-4-amino-4-deoxy-L-arabinose (UDP-L-Ara4N) to form UDP-L-4-formamido-arabinose (UDP-L-Ara4FN). The modified arabinose is attached to lipid A and is required for resistance to polymyxin and cationic antimicrobial peptides. In Yersinia pseudotuberculosis serotype O:3 (strain YPIII), this protein is Bifunctional polymyxin resistance protein ArnA.